A 451-amino-acid chain; its full sequence is Pre-mRNA-splicing factor PRP46 (451 aa).

WD repeat units lie at residues 137 to 168, 180 to 210, 222 to 252, 264 to 294, 306 to 335, 348 to 377, and 397 to 427; these read GHLGWVRCVAIDPVDNEWFITGSNDTTMKVWD, GHVMTVRDVAVSDRHPYLFSVSEDKTVKCWD, GHLSGVRTVSIHPTLDLIATAGRDSVIKLWD, GHKGPINQVQCTPVDPQVVSSSTDATVRLWD, HHKRSVRATALHPKEFSVASACTDDIRSWG, EKTGIINTLSINQDDVLFAGGDNGVLSFYD, and EGERSVLCSTFDKTGLRLITGEADKSIKIWK.

This sequence belongs to the WD repeat PRL1/PRL2 family. In terms of assembly, belongs to the CWC complex (or CEF1-associated complex), a spliceosome subcomplex composed of the U2, U5 and U6 snRNAs and at least BUD13, BUD31, BRR2, CDC40, CEF1, CLF1, CUS1, CWC2, CWC15, CWC21, CWC22, CWC23, CWC24, CWC25, CWC27, ECM2, HSH155, IST3, ISY1, LEA1, MSL1, NTC20, PRP8, PRP9, PRP11, PRP19, PRP21, PRP22, PRP45, PRP46, SLU7, SMB1, SMD1, SMD2, SMD3, SMX2, SMX3, SNT309, SNU114, SPP2, SYF1, SYF2, RSE1 and YJU2. Interacts with CEF1, CLF1, NTC20, PRP45 and SYF1.

It localises to the cytoplasm. The protein localises to the nucleus. In terms of biological role, involved in pre-mRNA splicing. May also be required for cell cycle progression at G2/M. This is Pre-mRNA-splicing factor PRP46 (PRP46) from Saccharomyces cerevisiae (strain ATCC 204508 / S288c) (Baker's yeast).